We begin with the raw amino-acid sequence, 259 residues long: MATIKEIKELLVTVKELESPIFLELEKDNRSGVQKEISKRKRAIQAELDENLRLESMLSYEKELYKQGLTLIAGIDEVGRGPLAGPVVAAAVILPKNCKIKGLNDSKKIPKKKHLEIFQAVQDQALSIGIGIIDNQVIDQVNIYEATKLAMQEAISQLSPQPEHLLIDAMKLDLPISQTSIIKGDANSLSIAAASIVAKVTRDELMKEYDQQFPGYDFATNAGYGTAKHLEGLTKLGVTPIHRTSFEPVKSLVLGKKES.

The RNase H type-2 domain occupies 70–258 (TLIAGIDEVG…VKSLVLGKKE (189 aa)). D76, E77, and D168 together coordinate a divalent metal cation.

The protein belongs to the RNase HII family. The cofactor is Mn(2+). Mg(2+) serves as cofactor.

Its subcellular location is the cytoplasm. It carries out the reaction Endonucleolytic cleavage to 5'-phosphomonoester.. Functionally, endonuclease that specifically degrades the RNA of RNA-DNA hybrids. The sequence is that of Ribonuclease HII from Streptococcus pneumoniae serotype 19F (strain G54).